A 65-amino-acid chain; its full sequence is MHCLPVLVILLLLIASTPSVDARPNPKDDVPLASFHGAVNAKRYLRTLWNSRDCCDPKEPCCFIG.

The signal sequence occupies residues 1–22 (MHCLPVLVILLLLIASTPSVDA). Residues 23–52 (RPNPKDDVPLASFHGAVNAKRYLRTLWNSR) constitute a propeptide that is removed on maturation. Isoleucine amide is present on Ile-64.

Belongs to the conotoxin T superfamily. In terms of processing, contains 2 disulfide bonds that can be either 'C1-C3, C2-C4' or 'C1-C4, C2-C3', since these disulfide connectivities have been observed for conotoxins with cysteine framework V (for examples, see AC P0DQQ7 and AC P81755). Expressed by the venom duct.

The protein localises to the secreted. This chain is Conotoxin TsMRCL-05, found in Conus tessulatus (Tessellate cone).